A 383-amino-acid chain; its full sequence is Succinyl-diaminopimelate desuccinylase (383 aa).

His-73 contacts Zn(2+). Asp-75 is a catalytic residue. Asp-107 provides a ligand contact to Zn(2+). Glu-141 serves as the catalytic Proton acceptor. Zn(2+)-binding residues include Glu-142, Glu-170, and His-356.

This sequence belongs to the peptidase M20A family. DapE subfamily. In terms of assembly, homodimer. The cofactor is Zn(2+). Co(2+) is required as a cofactor.

It carries out the reaction N-succinyl-(2S,6S)-2,6-diaminopimelate + H2O = (2S,6S)-2,6-diaminopimelate + succinate. The protein operates within amino-acid biosynthesis; L-lysine biosynthesis via DAP pathway; LL-2,6-diaminopimelate from (S)-tetrahydrodipicolinate (succinylase route): step 3/3. In terms of biological role, catalyzes the hydrolysis of N-succinyl-L,L-diaminopimelic acid (SDAP), forming succinate and LL-2,6-diaminopimelate (DAP), an intermediate involved in the bacterial biosynthesis of lysine and meso-diaminopimelic acid, an essential component of bacterial cell walls. The polypeptide is Succinyl-diaminopimelate desuccinylase (Pseudomonas syringae pv. syringae (strain B728a)).